A 411-amino-acid polypeptide reads, in one-letter code: Tyrosine--tRNA ligase (411 aa).

Y34 contacts L-tyrosine. Positions 39 to 48 match the 'HIGH' region motif; it reads CTATSLHIGS. L-tyrosine-binding residues include Y171 and Q175. The 'KMSKS' region motif lies at 231–235; it reads KMGKT. K234 contributes to the ATP binding site. Residues 345 to 411 form the S4 RNA-binding domain; it reads ISAYELFHEA…GKKRHILVRV (67 aa).

This sequence belongs to the class-I aminoacyl-tRNA synthetase family. TyrS type 1 subfamily. As to quaternary structure, homodimer.

The protein resides in the cytoplasm. The catalysed reaction is tRNA(Tyr) + L-tyrosine + ATP = L-tyrosyl-tRNA(Tyr) + AMP + diphosphate + H(+). Its function is as follows. Catalyzes the attachment of tyrosine to tRNA(Tyr) in a two-step reaction: tyrosine is first activated by ATP to form Tyr-AMP and then transferred to the acceptor end of tRNA(Tyr). In Rickettsia felis (strain ATCC VR-1525 / URRWXCal2) (Rickettsia azadi), this protein is Tyrosine--tRNA ligase.